A 755-amino-acid chain; its full sequence is Bacteriophytochrome (755 aa).

Position 24 (C24) interacts with a tetrapyrrole. A PAS domain is found at 26-94 (REPIHIPGSI…LQAALPPGCP (69 aa)). The tract at residues 95–504 (DALQYRATLD…RDTLTGALGE (410 aa)) is chromophore binding domain. The GAF domain occupies 152-316 (NLRALAEVAT…YLGRLLSLQV (165 aa)). The region spanning 529–747 (VISHHMQEPV…TFRCWLPDAG (219 aa)) is the Histidine kinase domain. Position 532 is a phosphohistidine; by autocatalysis (H532).

The protein in the N-terminal section; belongs to the phytochrome family. Post-translationally, contains one covalently linked tetrapyrrole chromophore. Lacks the cysteine conserved in plant phytochromes (at the position of Met-259) that binds chromophore. An engineered sequence used for X-ray crystallography forms a thioether link to biliverdin through Cys-24. The natural sequence can bind phycocyanobilin and phytochromobilin in vitro, but the identity of the natural chromophore is unknown.

It carries out the reaction ATP + protein L-histidine = ADP + protein N-phospho-L-histidine.. In terms of biological role, photoreceptor which exists in two forms that are reversibly interconvertible by light: the R form that absorbs maximally in the red region of the spectrum and the FR form that absorbs maximally in the far-red region. Also has a slight blue shift for the far-red maximum. Could also absorb green light. May participate in regulating pigment synthesis like the carotenoid deinoxanthin which could protect the bacterium from intense visible light. The polypeptide is Bacteriophytochrome (bphP) (Deinococcus radiodurans (strain ATCC 13939 / DSM 20539 / JCM 16871 / CCUG 27074 / LMG 4051 / NBRC 15346 / NCIMB 9279 / VKM B-1422 / R1)).